The primary structure comprises 328 residues: Diacetylchitobiose uptake system permease protein DasB (328 aa).

A disordered region spans residues 1–27; sequence MTVQTERPPSGPSDVRKADGGGTGGTR. 6 helical membrane passes run 36–56, 104–124, 134–154, 188–208, 247–267, and 297–317; these read ALAP…LLGW, IIFT…IGLL, FVLM…ATTV, FSTF…FVAI, FLYA…VQVY, and MGAA…AYYL. The ABC transmembrane type-1 domain occupies 100-316; it reads TVRSIIFTAV…LILLGLTAYY (217 aa).

This sequence belongs to the binding-protein-dependent transport system permease family. In terms of assembly, the complex is composed of two ATP-binding proteins (MsiK), two transmembrane proteins (DasB and DasC) and a solute-binding protein (DasA).

It localises to the cell membrane. Functionally, part of the ABC transporter complex DasABC-MsiK involved in N,N'-diacetylchitobiose ((GlcNAc)2) uptake. Responsible for the translocation of the substrate across the membrane. This is Diacetylchitobiose uptake system permease protein DasB from Streptomyces coelicolor (strain ATCC BAA-471 / A3(2) / M145).